Here is a 259-residue protein sequence, read N- to C-terminus: Insulin-like growth factor-binding protein 1 (259 aa).

Residues 1–25 form the signal peptide; that stretch reads MSEVPVARVWLVLLLLTVQVGVTAG. An IGFBP N-terminal domain is found at 26–107; sequence APWQCAPCSA…TRGQGACVQE (82 aa). 6 disulfide bridges follow: Cys-30-Cys-57, Cys-33-Cys-59, Cys-41-Cys-60, Cys-48-Cys-63, Cys-71-Cys-84, and Cys-78-Cys-104. Ser-45 carries the phosphoserine; by FAM20C modification. Phosphoserine occurs at positions 120, 123, 126, and 144. Ser-156 is subject to Phosphoserine; by FAM20C. Thr-157 is modified (phosphothreonine; by FAM20C). At Tyr-158 the chain carries Phosphotyrosine. The region spanning 173–251 is the Thyroglobulin type-1 domain; it reads KEPCRIELYR…SPEIRGDPNC (79 aa). 3 disulfide bridges follow: Cys-176-Cys-206, Cys-217-Cys-228, and Cys-230-Cys-251. At Thr-193 the chain carries Phosphothreonine; by FAM20C. A phosphoserine; by FAM20C mark is found at Ser-194 and Ser-199. Position 242 is a phosphoserine; by FAM20C (Ser-242). The Cell attachment site signature appears at 246–248; that stretch reads RGD.

In terms of assembly, binds equally well IGF1 and IGF2. Interacts with integrin ITGA5:ITGB1. Interacts with VHL; this interaction inhibits HIF1A degradation. Post-translationally, phosphorylated; probably by casein kinase II. Phosphorylation alters the affinity of the protein for IGFs. In amniotic fluid, the unmodified protein is the most abundant form, while mono-, bi-, tri- and tetraphosphorylated forms are present in decreasing amounts. The phosphorylation state may influence the propensity to proteolysis.

The protein localises to the secreted. In terms of biological role, multifunctional protein that plays a critical role in regulating the availability of IGFs such as IGF1 and IGF2 to their receptors and thereby regulates IGF-mediated cellular processes including cell migration, proliferation, differentiation or apoptosis in a cell-type specific manner. Also plays a positive role in cell migration by interacting with integrin ITGA5:ITGB1 through its RGD motif. Mechanistically, binding to integrins leads to activation of focal adhesion kinase/PTK2 and stimulation of the mitogen-activated protein kinase (MAPK) pathway. Regulates cardiomyocyte apoptosis by suppressing HIF-1alpha/HIF1A ubiquitination and subsequent degradation. This chain is Insulin-like growth factor-binding protein 1 (IGFBP1), found in Homo sapiens (Human).